We begin with the raw amino-acid sequence, 33 residues long: Brevinin-2GRb (33 aa).

In terms of tissue distribution, expressed by the skin glands.

It localises to the secreted. Functionally, antimicrobial peptide active against the Gram-positive bacterium S.aureus (MIC=25 uM) and against the Gram-negative bacteria E.coli (MIC=6 uM). Has no antifungal activity against C.albicans. Shows hemolytic activity against human erythrocytes only at high concentrations (LC(50)=180 uM). The polypeptide is Brevinin-2GRb (Odorrana grahami (Yunnanfu frog)).